The chain runs to 1659 residues: MSLSHLTLDQYYEIQCNELEAIRSIYMDDFTDLTKRKSSWDKQPQIIFEITLRSVDKEPVESSITLHFAMTPMYPYTAPEIEFKNVQNVMDSQLQMLKSEFKKIHNTSRGQEIIFEITSFTQEKLDEFQNVVNTQSLEDDRLQRIKETKEQLEKEEREKQQETIKKRSDEQRRIDEIVQRELEKRQDDDDDLLFNRTTQLDLQPPSEWVASGEAIVFSKTIKAKLPNNSMFKFKAVVNPKPIKLTSDIFSFSKQFLVKPYIPPESPLADFLMSSEMMENFYYLLSEIELDNSYFNTSNGKKEIANLEKELETVLKAKHDNVNRLFGYTVERMGRNNATFVWKIRLLTEYCNYYPLGDLIQSVGFVNLATARIWMIRLLEGLEAIHKLGIVHKCINLETVILVKDADFGSTIPKLVHSTYGYTVLNMLSRYPNKNGSSVELSPSTWIAPELLKFNNAKPQRLTDIWQLGVLFIQIISGSDIVMNFETPQEFLDSTSMDETLYDLLSKMLNNDPKKRLGTLELLPMKFLRTNIDSTINRFNLVSESVNSNSLELTPGDTITVRGNGGRTLSQSSIRRRSFNVGSRFSSINPATRSRYASDFEEIAVLGQGAFGQVVKARNALDSRYYAIKKIRHTEEKLSTILSEVMLLASLNHQYVVRYYAAWLEEDSMDENVFESTDEESDLSESSSDFEENDLLDQSSIFKNRTNHDLDNSNWDFISGSGYPDIVFENSSRDDENEDLDHDTSSTSSSESQDDTDKESKSIQNVPRRRNFVKPMTAVKKKSTLFIQMEYCENRTLYDLIHSENLNQQRDEYWRLFRQILEALSYIHSQGIIHRDLKPMNIFIDESRNVKIGDFGLAKNVHRSLDILKLDSQNLPGSSDNLTSAIGTAMYVATEVLDGTGHYNEKIDMYSLGIIFFEMIYPFSTGMERVNILKKLRSVSIEFPPDFDDNKMKVEKKIIRLLIDHDPNKRPGARTLLNSGWLPVKHQDEVIKEALKSLSNPSSPWQQQVRESLFNQSYSLTNDILFDNSVPTSTPFANILRSQMTEEVVKIFRKHGGIENNAPPRIFPKAPIYGTQNVYEVLDKGGTVLQLQYDLTYPMARYLSKNPSLISKQYRMQHVYRPPDHSRSSLEPRKFGEIDFDIISKSSSESGFYDAESLKIIDEILTVFPVFEKTNTFFILNHADILESVFNFTNIDKAQRPLVSRMLSQVGFARSFKEVKNELKAQLNISSTALNDLELFDFRLDFEAAKKRLYKLMIDSPHLKKIEDSLSHISKVLSYLKPLEVARNVVISPLSNYNSAFYKGGIMFHAVYDDGSSRNMIAAGGRYDTLISFFARPSGKKSSNTRKAVGFNLAWETIFGIAQNYFKLASGNRIKKRNRFLKDTAVDWKPSRCDVLISSFSNSLLDTIGVTILNTLWKQNIKADMLRDCSSVDDVVTGAQQDGIDWILLIKQQAYPLTNHKRKYKPLKIKKLSTNVDIDLDLDEFLTLYQQETGNKSLINDSLTLGDKADEFKRWDENSSAGSSQEGDIDDVVAGSTNNQKVIYVPNMATRSKKANKREKWVYEDAARNSSNMILHNLSNAPIITVDALRDETLEIISITSLAQKEEWLRKVFGSGNNSTPRSFATSIYNNLSKEAHKGNRWAILYCHKTGKSSVIDLQR.

The 112-residue stretch at 17–128 folds into the RWD domain; the sequence is NELEAIRSIY…SFTQEKLDEF (112 aa). A disordered region spans residues 149–170; the sequence is KEQLEKEEREKQQETIKKRSDE. 2 consecutive Protein kinase domains span residues 256–527 and 599–981; these read LVKP…MKFL and FEEI…SGWL. ATP contacts are provided by residues 605-613 and Lys628; that span reads LGQGAFGQV. 2 disordered regions span residues 671–691 and 727–768; these read NVFE…DFEE and FENS…VPRR. Ser761 carries the post-translational modification Phosphoserine. Catalysis depends on Asp835, which acts as the Proton acceptor. Phosphothreonine; by autocatalysis occurs at positions 882 and 887. The interval 999–1519 is histidyl-tRNA synthetase-like; sequence NPSSPWQQQV…EFKRWDENSS (521 aa).

Belongs to the protein kinase superfamily. Ser/Thr protein kinase family. GCN2 subfamily. In terms of assembly, homodimer; homodimerization is important for kinase activation by uncharged tRNAs. Interacts (via N-terminal RWD domain) with GCN1 (via N- and C-terminus); this interaction stimulates GCN2 kinase activity in a GCN20-dependent manner in response to amino acid starvation. Interacts (via N-terminus) with the GCN1-GCN20 complex on translating ribosomes in amino acid-starved cells; GCN1 may bind near the ribosomal A-site and promotes the transfer of uncharged tRNAs from the A-site to the tRNA-binding domain in GCN2 for its subsequent kinase activation, and hence allowing GCN4 translational activation and derepression of amino acid biosynthetic genes. Interacts (via C-terminus) with TIF11; this interaction is direct, occurs in amino acid-repleted cells, may be stabilized in a ribosome-dependent manner, reduces GCN2-mediated eIF-2-alpha phosphorylation but not GCN2 autophosphorylation and is lost in amino acid-starved cells and by uncharged tRNAs. Associates (via C-terminus) with ribosomes. Mg(2+) serves as cofactor. Autophosphorylated, autophosphorylation on Thr-882 and Thr-887 increases kinase activity.

Its subcellular location is the cytoplasm. It catalyses the reaction L-seryl-[protein] + ATP = O-phospho-L-seryl-[protein] + ADP + H(+). It carries out the reaction L-threonyl-[protein] + ATP = O-phospho-L-threonyl-[protein] + ADP + H(+). Its activity is regulated as follows. The integrated stress response (ISR) is activated in response to conditions that promote ribosome collisions: GCN1, which acts as a ribosome collision sensor, activates GCN2. The RQC pathway and the integrated stress response (ISR) antagonize each other: HEL2 prevents the activation of GCN2, while GCN2 suppresses RQC activation. Ribosome stalling-induced integrated stress response prefers ribosomes with empty A sites. The kinase activity is stimulated upon binding to uncharged tRNAs. Functionally, metabolic-stress sensing protein kinase that phosphorylates the alpha subunit of eukaryotic translation initiation factor 2 (eIF-2-alpha/SUI2) on 'Ser-52' in response to low amino acid, carbon, or purine availability. Required for adapatation to nutrient starvation by acting as a key component of the integrated stress response (ISR), by which cells alter their translational and transcriptional output in response to starvation. Converts phosphorylated eIF-2-alpha/SUI2 either to a competitive inhibitor of translation initiation factor eIF-2B, leading to a global protein synthesis repression, and thus to a reduced overall utilization of amino acids, or to a translational initiation activation of specific mRNAs, such as the transcriptional activator GCN4, and hence allowing GCN4-mediated reprogramming of transcription to alleviate nutrient depletion. Binds uncharged tRNAs. Binds to aminoacylated tRNA(Phe) less tightly than to deacylated tRNA(Phe). Binds to double-stranded RNA. The polypeptide is eIF-2-alpha kinase GCN2 (Saccharomyces cerevisiae (strain ATCC 204508 / S288c) (Baker's yeast)).